The following is a 139-amino-acid chain: Cellular retinoic acid-binding protein 2 (139 aa).

Positions 21-31 (KALGVNMMMRK) match the Nuclear localization signal motif. A Glycyl lysine isopeptide (Lys-Gly) (interchain with G-Cter in SUMO) cross-link involves residue Lys103. An all-trans-retinoate-binding site is contributed by 134 to 136 (RVY).

This sequence belongs to the calycin superfamily. Fatty-acid binding protein (FABP) family. Interacts with importin alpha, RXR and RARA. Sumoylated in response to retinoic acid binding, sumoylation is critical for dissociation from ER and subsequent nuclear translocation.

The protein localises to the cytoplasm. It localises to the endoplasmic reticulum. The protein resides in the nucleus. Transports retinoic acid to the nucleus. Regulates the access of retinoic acid to the nuclear retinoic acid receptors. This chain is Cellular retinoic acid-binding protein 2 (Crabp2), found in Rattus norvegicus (Rat).